We begin with the raw amino-acid sequence, 1117 residues long: MISENYIEPAFLLPDLIEIQRSSFRWFLEEGLIEELNSFSPITDYTGKLELHFLGHNYKLKEPKYSVEEAKRRDSTYAVQMYVPTRLLNKETGDIKEQEVFIGDLPLMTDRGTFIINGAERVIVNQIVRSPGVYYKSEIDKNGRRTYSASLIPNRGAWLKFETDRNDLVWVRIDKTRKLSAQVLLKALGLSDNEIFDALRHPEYFQKTIEKEGQFSEEEALMELYRKLRPGEPPTVLGGQQLLDSRFFDPKRYDLGRVGRYKLNKKLRLSVPDTVRVLTSGDILAAVDYLINLEYDIGSIDDIDHLGNRRVRSVGELLQNQVRVGLNRLERIIRERMTVSDAEVLTPASLVNPKPLVAAIKEFFGSSQLSQFMDQTNPLAELTHKRRLSALGPGGLTRERAGFAVRDIHPSHYGRICPIETPEGPNAGLIGSLATHARVNQYGFLETPFRPVENGRVRFDQPAVYMTADEEDDLRVAPGDIPVDENGHIIGPQVPVRYRQEFSTTTPEQVDYVAVSPVQIVSVATSMIPFLEHDDANRALMGSNMQRQAVPLLKPERPLVGTGLEAQGARDSGMVIVSRTDGDVVYVDATEIRVRVSGQLPAASGKSTDNGQLTSQKGQEIRYTVSKYQRSNQDTCLNQKPLVRIGERVVAGQVLADGSSTEGGELALGQNIVVAYMPWEGYNYEDAILISERLVQDDIYTSIHIEKYEIEARQTKLGPEEITREIPNVGEDALRQLDEQGIIRIGAWVEAGDILVGKVTPKGESDQPPEEKLLRAIFGEKARDVRDNSLRVPNGEKGRVVDVRLFTREQGDELPPGANMVVRVYVAQKRKIQVGDKMAGRHGNKGIISRILPIEDMPYLPDGSPVDIVLNPLGVPSRMNVGQVFECLLGWAGHTLGVRFKITPFDEMYGEESSRRIVHGKLQEARDETGKDWVYNPDDPGKIMVFDGRTGEPFDRPVTIGVAYMLKLVHLVDDKIHARSTGPYSLVTQQPLGGKAQQGGQRFGEMEVWALEAFGAAYTLQELLTVKSDDMQGRNEALNAIVKGKAIPRPGTPESFKVLMRELQSLGLDIAVHKVETQADGSSLDVEVDLMADQLARRTPPRPTYESLSRESLDDDE.

The tract at residues 1094 to 1117 (QLARRTPPRPTYESLSRESLDDDE) is disordered. Over residues 1108 to 1117 (LSRESLDDDE) the composition is skewed to basic and acidic residues.

The protein belongs to the RNA polymerase beta chain family. As to quaternary structure, in cyanobacteria the RNAP catalytic core is composed of 2 alpha, 1 beta, 1 beta', 1 gamma and 1 omega subunit. When a sigma factor is associated with the core the holoenzyme is formed, which can initiate transcription.

It carries out the reaction RNA(n) + a ribonucleoside 5'-triphosphate = RNA(n+1) + diphosphate. Functionally, DNA-dependent RNA polymerase catalyzes the transcription of DNA into RNA using the four ribonucleoside triphosphates as substrates. The protein is DNA-directed RNA polymerase subunit beta of Trichormus variabilis (strain ATCC 29413 / PCC 7937) (Anabaena variabilis).